A 272-amino-acid chain; its full sequence is Indole-3-glycerol phosphate synthase (272 aa).

This sequence belongs to the TrpC family.

The catalysed reaction is 1-(2-carboxyphenylamino)-1-deoxy-D-ribulose 5-phosphate + H(+) = (1S,2R)-1-C-(indol-3-yl)glycerol 3-phosphate + CO2 + H2O. It participates in amino-acid biosynthesis; L-tryptophan biosynthesis; L-tryptophan from chorismate: step 4/5. The chain is Indole-3-glycerol phosphate synthase from Mycolicibacterium gilvum (strain PYR-GCK) (Mycobacterium gilvum (strain PYR-GCK)).